Reading from the N-terminus, the 221-residue chain is Ribosomal RNA large subunit methyltransferase E (221 aa).

S-adenosyl-L-methionine contacts are provided by Gly72, Trp74, Asp91, Asp107, and Asp131. Lys171 acts as the Proton acceptor in catalysis.

It belongs to the class I-like SAM-binding methyltransferase superfamily. RNA methyltransferase RlmE family.

The protein resides in the cytoplasm. It carries out the reaction uridine(2552) in 23S rRNA + S-adenosyl-L-methionine = 2'-O-methyluridine(2552) in 23S rRNA + S-adenosyl-L-homocysteine + H(+). Specifically methylates the uridine in position 2552 of 23S rRNA at the 2'-O position of the ribose in the fully assembled 50S ribosomal subunit. The protein is Ribosomal RNA large subunit methyltransferase E of Zymomonas mobilis subsp. mobilis (strain ATCC 31821 / ZM4 / CP4).